Consider the following 278-residue polypeptide: ATP synthase subunit delta (278 aa).

This sequence belongs to the ATPase delta chain family. As to quaternary structure, F-type ATPases have 2 components, F(1) - the catalytic core - and F(0) - the membrane proton channel. F(1) has five subunits: alpha(3), beta(3), gamma(1), delta(1), epsilon(1). F(0) has three main subunits: a(1), b(2) and c(10-14). The alpha and beta chains form an alternating ring which encloses part of the gamma chain. F(1) is attached to F(0) by a central stalk formed by the gamma and epsilon chains, while a peripheral stalk is formed by the delta and b chains.

It is found in the cell membrane. Its function is as follows. F(1)F(0) ATP synthase produces ATP from ADP in the presence of a proton or sodium gradient. F-type ATPases consist of two structural domains, F(1) containing the extramembraneous catalytic core and F(0) containing the membrane proton channel, linked together by a central stalk and a peripheral stalk. During catalysis, ATP synthesis in the catalytic domain of F(1) is coupled via a rotary mechanism of the central stalk subunits to proton translocation. Functionally, this protein is part of the stalk that links CF(0) to CF(1). It either transmits conformational changes from CF(0) to CF(1) or is implicated in proton conduction. The sequence is that of ATP synthase subunit delta from Rhodococcus opacus (strain B4).